The sequence spans 346 residues: Dimethyladenosine transferase 1, mitochondrial (346 aa).

A mitochondrion-targeting transit peptide spans 1 to 27 (MAASGKLSTCRLPPLPTIREIIKLLRL). The S-adenosyl-L-methionine site is built by L38, G63, E85, K86, D111, V112, and N141.

The protein belongs to the class I-like SAM-binding methyltransferase superfamily. rRNA adenine N(6)-methyltransferase family. KsgA subfamily. Interacts with mitochondrial RNA polymerase POLRMT. Interacts with TFAM. Bound to the maturing mtSSU until the late stages of assembly. As to expression, ubiquitously expressed.

The protein localises to the mitochondrion. It catalyses the reaction adenosine(N)/adenosine(N+1) in rRNA + 4 S-adenosyl-L-methionine = N(6)-dimethyladenosine(N)/N(6)-dimethyladenosine(N+1) in rRNA + 4 S-adenosyl-L-homocysteine + 4 H(+). Functionally, mitochondrial methyltransferase which uses S-adenosyl methionine to dimethylate two highly conserved adjacent adenosine residues (A1583 and A1584) within the loop of helix 45 at the 3-prime end of 12S rRNA, thereby regulating the assembly or stability of the small subunit of the mitochondrial ribosome. Also required for basal transcription of mitochondrial DNA, probably via its interaction with POLRMT and TFAM. Stimulates transcription independently of the methyltransferase activity. This Homo sapiens (Human) protein is Dimethyladenosine transferase 1, mitochondrial.